A 189-amino-acid chain; its full sequence is Batroxicidin (189 aa).

The N-terminal stretch at 1–22 is a signal peptide; that stretch reads MQGFFWKTWLVVALCGTSSSLA. A propeptide spanning residues 23–155 is cleaved from the precursor; it reads HRPLSYGEAL…DEEKDRPKRV (133 aa). Intrachain disulfides connect C79–C90 and C101–C118. Positions 125–148 are enriched in acidic residues; the sequence is EEEEEDEEEQKAEVEKDEEKEDEE. The disordered stretch occupies residues 125-152; sequence EEEEEDEEEQKAEVEKDEEKEDEEKDRP.

This sequence belongs to the cathelicidin family. As to expression, expressed by the venom gland.

It is found in the secreted. The protein resides in the target cell membrane. Potent antimicrobial peptide against Gram-negative (MIC=0.25 ug/ml against E.coli ATCC 25922, MIC=1 ug/ml against P.aeruginosa) and Gram-positive bacteria (MIC=32 ug/ml against E.faecalis, MIC=32 ug/ml against S.aureus). Adopts an amphipathic alpha helical conformation, that may allow to partition into the target membrane. Low hemolytic activities have been observed on mammalian cells. In addition, when tested in vitro on the parasite Trypanosoma cruzi (responsible of the Chagas disease), is able to reduce the number of the three forms (epimastigote, trypomastigote and amastigote) by inducing cell death through necrosis. This is Batroxicidin from Bothrops atrox (Barba amarilla).